A 246-amino-acid chain; its full sequence is 1-(5-phosphoribosyl)-5-[(5-phosphoribosylamino)methylideneamino] imidazole-4-carboxamide isomerase (246 aa).

Asp8 functions as the Proton acceptor in the catalytic mechanism. Asp130 serves as the catalytic Proton donor.

It belongs to the HisA/HisF family.

It localises to the cytoplasm. It carries out the reaction 1-(5-phospho-beta-D-ribosyl)-5-[(5-phospho-beta-D-ribosylamino)methylideneamino]imidazole-4-carboxamide = 5-[(5-phospho-1-deoxy-D-ribulos-1-ylimino)methylamino]-1-(5-phospho-beta-D-ribosyl)imidazole-4-carboxamide. It participates in amino-acid biosynthesis; L-histidine biosynthesis; L-histidine from 5-phospho-alpha-D-ribose 1-diphosphate: step 4/9. The polypeptide is 1-(5-phosphoribosyl)-5-[(5-phosphoribosylamino)methylideneamino] imidazole-4-carboxamide isomerase (Shigella sonnei (strain Ss046)).